The sequence spans 700 residues: Acetoacetyl-CoA synthetase (700 aa).

A disordered region spans residues 1–35 (MTAVSANGKTTEKHENGAHTNGTTNGTTNGSMNGN). Low complexity predominate over residues 18 to 35 (AHTNGTTNGTTNGSMNGN).

It belongs to the ATP-dependent AMP-binding enzyme family. As to expression, present in most cells of the organism.

It is found in the cytoplasm. Its subcellular location is the nucleus. The catalysed reaction is acetoacetate + ATP + CoA = acetoacetyl-CoA + AMP + diphosphate. In terms of biological role, activates acetoacetate to acetoacetyl-CoA. Negatively regulates let-60 Ras activity during vulval induction. This chain is Acetoacetyl-CoA synthetase (sur-5), found in Caenorhabditis elegans.